The primary structure comprises 363 residues: Dihydroorotate dehydrogenase (quinone) (363 aa).

FMN is bound by residues 62-66 and Thr-86; that span reads AGYDK. Lys-66 is a binding site for substrate. 111–115 serves as a coordination point for substrate; it reads NRLGF. FMN-binding residues include Asn-140 and Asn-171. Asn-171 is a binding site for substrate. Ser-174 (nucleophile) is an active-site residue. Asn-176 is a substrate binding site. Positions 216 and 244 each coordinate FMN. 245-246 lines the substrate pocket; sequence NT. Residues Gly-266, Gly-295, and 316-317 each bind FMN; that span reads YT.

It belongs to the dihydroorotate dehydrogenase family. Type 2 subfamily. As to quaternary structure, monomer. FMN is required as a cofactor.

The protein localises to the cell membrane. It catalyses the reaction (S)-dihydroorotate + a quinone = orotate + a quinol. It participates in pyrimidine metabolism; UMP biosynthesis via de novo pathway; orotate from (S)-dihydroorotate (quinone route): step 1/1. Its function is as follows. Catalyzes the conversion of dihydroorotate to orotate with quinone as electron acceptor. This Chelativorans sp. (strain BNC1) protein is Dihydroorotate dehydrogenase (quinone).